We begin with the raw amino-acid sequence, 140 residues long: Complex III assembly factor LYRM7 (140 aa).

The tract at residues 93–140 is disordered; the sequence is QYEFVNDQPPQRKKRGKIQIDDEQPTTCCGGGCGKPMPSNNSEKSTCS. The span at 130 to 140 shows a compositional bias: polar residues; the sequence is PSNNSEKSTCS.

Belongs to the complex I LYR family. As to quaternary structure, interacts with UQCRFS1.

The protein localises to the mitochondrion matrix. Its function is as follows. Assembly factor required for Rieske Fe-S protein UQCRFS1 incorporation into the cytochrome b-c1 (CIII) complex. Functions as a chaperone, binding to this subunit within the mitochondrial matrix and stabilizing it prior to its translocation and insertion into the late CIII dimeric intermediate within the mitochondrial inner membrane. This Dictyostelium discoideum (Social amoeba) protein is Complex III assembly factor LYRM7 (lyrm7).